The sequence spans 262 residues: MAGVARMLAAVVCAIMPAAAMAAGGVGALEPSGWVRAHATFYGGADASGTMGGACGYGNLYAQGYGTRTAALSTALFNDGLACGQCYKLVCDRKTDRTWCKPGVSVTITATNFCPPNWDLPSDSGGWCNPPRPHFDMAQPAWEKIGIYRGGIIPVIYQRVPCMKKGGVRFTINGHDYFQLVLLTNVGAAGSIKAMDVKGSKSPDWMAMAHNWGAQWHSLAYLTGQGLSFRVTITDGQTLVFPNVVRPGWRFGQTFASNIQFK.

The first 22 residues, 1–22 (MAGVARMLAAVVCAIMPAAAMA), serve as a signal peptide directing secretion. Positions 52-167 (GGACGYGNLY…QRVPCMKKGG (116 aa)) constitute an Expansin-like EG45 domain. One can recognise an Expansin-like CBD domain in the interval 177 to 257 (YFQLVLLTNV…GWRFGQTFAS (81 aa)).

Belongs to the expansin family. Expansin A subfamily. In terms of tissue distribution, expressed in roots and flowers.

It localises to the secreted. The protein resides in the cell wall. Its subcellular location is the membrane. Its function is as follows. May cause loosening and extension of plant cell walls by disrupting non-covalent bonding between cellulose microfibrils and matrix glucans. No enzymatic activity has been found. May be required for rapid internodal elongation in deepwater rice during submergence. The polypeptide is Expansin-A13 (EXPA13) (Oryza sativa subsp. japonica (Rice)).